The chain runs to 400 residues: Outer membrane protein alpha (400 aa).

Residues 1–20 (MKRVLLTVAMLSVFFSAMFA) form the signal peptide. The 61-residue stretch at 21-81 (FFPDVPKDHW…DFIEQKMLAG (61 aa)) folds into the SLH domain. Residues 85-379 (DLAQVVGNLS…ESVKAYNRNL (295 aa)) adopt a coiled-coil conformation. A run of 3 repeats spans residues 208 to 232 (VNLHEKDIINIYNKISSVNEELNNK), 251 to 275 (VELHEKDIINLYNKVAALNEDLNKK), and 326 to 350 (VDLHEQDIVNLYGKTSSLEEDLNMK). Positions 208 to 350 (VNLHEKDIIN…SSLEEDLNMK (143 aa)) are 3 X 25 AA approximate repeat. Residues 380–400 (SILTGAFFGILGLILIAISGK) traverse the membrane as a helical segment.

Homotetramer.

Its subcellular location is the cell outer membrane. Links the outer membrane to the inner membrane. Long fibrous protein that could serve to separate the two membranes. The protein is Outer membrane protein alpha (omp-alpha) of Thermotoga maritima (strain ATCC 43589 / DSM 3109 / JCM 10099 / NBRC 100826 / MSB8).